We begin with the raw amino-acid sequence, 597 residues long: tRNA uridine 5-carboxymethylaminomethyl modification enzyme MnmG (597 aa).

11-16 lines the FAD pocket; that stretch reads GAGHAG. Residue 275–289 coordinates NAD(+); sequence SPRYCPSIEEKIERY.

The protein belongs to the MnmG family. In terms of assembly, homodimer. Heterotetramer of two MnmE and two MnmG subunits. The cofactor is FAD.

The protein resides in the cytoplasm. In terms of biological role, NAD-binding protein involved in the addition of a carboxymethylaminomethyl (cmnm) group at the wobble position (U34) of certain tRNAs, forming tRNA-cmnm(5)s(2)U34. This Endomicrobium trichonymphae protein is tRNA uridine 5-carboxymethylaminomethyl modification enzyme MnmG.